Consider the following 549-residue polypeptide: Ribosomal protein S6 kinase-like 1 (549 aa).

Positions 87–115 (IHVDPNKERREAVKLKITKYLRRAEEIFN) constitute an MIT domain. Residues 145 to 539 (SAVEQLRGCR…VSKLKSHPFF (395 aa)) form the Protein kinase domain. Residues 151-159 (RGCRVVGVI) and Lys-177 contribute to the ATP site. A disordered region spans residues 260–325 (LTPARLPSGH…SDLPKAPGGH (66 aa)). The active-site Proton acceptor is the Asp-412.

The protein belongs to the protein kinase superfamily. Ser/Thr protein kinase family. S6 kinase subfamily.

It catalyses the reaction L-seryl-[protein] + ATP = O-phospho-L-seryl-[protein] + ADP + H(+). It carries out the reaction L-threonyl-[protein] + ATP = O-phospho-L-threonyl-[protein] + ADP + H(+). The chain is Ribosomal protein S6 kinase-like 1 (RPS6KL1) from Pongo abelii (Sumatran orangutan).